The following is a 182-amino-acid chain: Oligoribonuclease (182 aa).

The 164-residue stretch at 8 to 171 folds into the Exonuclease domain; sequence LIWIDLEMTG…DDIRESIKEL (164 aa). Residue tyrosine 129 is part of the active site.

Belongs to the oligoribonuclease family.

It localises to the cytoplasm. Functionally, 3'-to-5' exoribonuclease specific for small oligoribonucleotides. The sequence is that of Oligoribonuclease (orn) from Haemophilus influenzae (strain ATCC 51907 / DSM 11121 / KW20 / Rd).